The primary structure comprises 534 residues: Cytochrome P450 monooxygenase AN1598 (534 aa).

Asn-3 carries an N-linked (GlcNAc...) asparagine glycan. The chain crosses the membrane as a helical span at residues 25 to 45 (LYLEILGVLSVVYLLQTLVAY). An N-linked (GlcNAc...) asparagine glycan is attached at Asn-95. Cys-464 is a binding site for heme. Asn-498 is a glycosylation site (N-linked (GlcNAc...) asparagine).

This sequence belongs to the cytochrome P450 family. Requires heme as cofactor.

Its subcellular location is the membrane. It participates in secondary metabolite biosynthesis; terpenoid biosynthesis. Its function is as follows. Bifunctional terpene synthase; part of the gene cluster that mediates the biosynthesis of the diterpene ent-pimara-8(14),15-diene (PD). Within the cluster, the HMG-CoA reductase AN1593 functions in the mevalonate pathway, which produces isoprenoid precursors. The geranylgeranyl pyrophosphate (GGPP) synthase AN1592 is needed in the formation of GGPP, the precursor for diterpenes. Lastly, the pimaradiene synthase pbcA performs the 2 cyclization steps that convert GGPP to ent-pimara-8(14),15-diene. The putative roles of the remaining cluster enzymes in ent-pimara-8(14),15-diene biosynthesis is unclear. The cytochrome P450 monooxygenase AN1598, the glutathione S-transferase AN1595, the oxidoreductases AN1596 and AN1597 probably function as decorative enzymes. It is possible that in biological conditions the compound is oxidized to ent-pimara-8(14),15-dien-19-oic acid, which is a bioactive diterpene compound predominant in many plant extracts. The chain is Cytochrome P450 monooxygenase AN1598 from Emericella nidulans (strain FGSC A4 / ATCC 38163 / CBS 112.46 / NRRL 194 / M139) (Aspergillus nidulans).